Reading from the N-terminus, the 262-residue chain is Acyl-[acyl-carrier-protein]--UDP-N-acetylglucosamine O-acyltransferase (262 aa).

Belongs to the transferase hexapeptide repeat family. LpxA subfamily. Homotrimer.

It is found in the cytoplasm. The enzyme catalyses a (3R)-hydroxyacyl-[ACP] + UDP-N-acetyl-alpha-D-glucosamine = a UDP-3-O-[(3R)-3-hydroxyacyl]-N-acetyl-alpha-D-glucosamine + holo-[ACP]. It participates in glycolipid biosynthesis; lipid IV(A) biosynthesis; lipid IV(A) from (3R)-3-hydroxytetradecanoyl-[acyl-carrier-protein] and UDP-N-acetyl-alpha-D-glucosamine: step 1/6. In terms of biological role, involved in the biosynthesis of lipid A, a phosphorylated glycolipid that anchors the lipopolysaccharide to the outer membrane of the cell. The chain is Acyl-[acyl-carrier-protein]--UDP-N-acetylglucosamine O-acyltransferase from Haemophilus influenzae (strain PittEE).